We begin with the raw amino-acid sequence, 265 residues long: MIKWPWKANHTAALAPLPWEAALAIPLLAGLSDEQQQKLVRLSERFLQQKRLVPLQGFELDELKSARIALLFCLPVLELGLEWLDGFHEVLIYPAPFVVDDEWEDDIGLVHNQRVVQSGQSWQQGPIILNWLDIQDSFDASGFNLIIHEVAHKLDMRNGDRASGIPLIALREVAGWEHDLHAAMENIQDEIDLVGESAASIDAYAATDPAECFAVLSEYFFSAPELFAPRFPSLWQRFCHFYGQDPLLRLRLRETPALSDGGQVH.

The Zn(2+) site is built by H111, H148, H152, and E211.

It belongs to the MtfA family. In terms of assembly, interacts with Mlc. It depends on Zn(2+) as a cofactor.

The protein localises to the cytoplasm. In terms of biological role, involved in the modulation of the activity of the glucose-phosphotransferase system (glucose-PTS). Interacts with the transcriptional repressor Mlc, preventing its interaction with DNA and leading to the modulation of expression of genes regulated by Mlc, including ptsG, which encodes the PTS system glucose-specific EIICB component. Functionally, shows zinc-dependent metallopeptidase activity. The sequence is that of Mlc titration factor A from Cronobacter sakazakii (strain ATCC BAA-894) (Enterobacter sakazakii).